The chain runs to 171 residues: Methylated-DNA--protein-cysteine methyltransferase (171 aa).

Cys-139 acts as the Nucleophile; methyl group acceptor in catalysis.

The protein belongs to the MGMT family.

It localises to the cytoplasm. The enzyme catalyses a 6-O-methyl-2'-deoxyguanosine in DNA + L-cysteinyl-[protein] = S-methyl-L-cysteinyl-[protein] + a 2'-deoxyguanosine in DNA. It carries out the reaction a 4-O-methyl-thymidine in DNA + L-cysteinyl-[protein] = a thymidine in DNA + S-methyl-L-cysteinyl-[protein]. In terms of biological role, involved in the cellular defense against the biological effects of O6-methylguanine (O6-MeG) and O4-methylthymine (O4-MeT) in DNA. Repairs the methylated nucleobase in DNA by stoichiometrically transferring the methyl group to a cysteine residue in the enzyme. This is a suicide reaction: the enzyme is irreversibly inactivated. The chain is Methylated-DNA--protein-cysteine methyltransferase from Salmonella typhi.